Reading from the N-terminus, the 255-residue chain is ETS-related transcription factor Elf-5 (255 aa).

Positions 33–119 (YPAFEHQTAC…FILQSIRSQG (87 aa)) constitute a PNT domain. The segment at residues 163–244 (SHLWEFVRDL…VDRRLVYKFG (82 aa)) is a DNA-binding region (ETS).

It belongs to the ETS family.

It is found in the nucleus. Its function is as follows. Transcriptionally activator that may play a role in regulating the later stages of keratinocytes terminal differentiation. Binds to DNA sequences containing the consensus nucleotide core sequence GGA[AT]. The sequence is that of ETS-related transcription factor Elf-5 (ELF5) from Bos taurus (Bovine).